The sequence spans 421 residues: Inner membrane protein YihN (421 aa).

Over 1–44 (MLTKKKWALFSLLTLCGGTIYKLPSLKDAFYIPMQEYFHLTNGQ) the chain is Periplasmic. A helical membrane pass occupies residues 45-65 (IGNAMSVNSFVTTVGFFLSIY). Topologically, residues 66-73 (FADKLPRR) are cytoplasmic. A helical transmembrane segment spans residues 74 to 91 (YTMSFSLIATGLLGVYLT). At 92-95 (TMPG) the chain is on the periplasmic side. A helical membrane pass occupies residues 96–118 (YWGILFVWALFGVTCDMMNWPVL). The Cytoplasmic portion of the chain corresponds to 119-146 (LKSVSRLGNSEQQGRLFGFFETGRGIVD). A helical membrane pass occupies residues 147–167 (TVVAFSALAVFTWFGSGLLGF). Residue Lys-168 is a topological domain, periplasmic. Residues 169-189 (AGIWFYSLIVIAVGIIIFFVL) form a helical membrane-spanning segment. At 190-220 (NDKEEAPSVEVKKEDGASKNTSMTSVLKDKT) the chain is on the cytoplasmic side. Transmembrane regions (helical) follow at residues 221–241 (IWLI…LTFF) and 242–262 (IPFL…YGII). The Cytoplasmic portion of the chain corresponds to 263–288 (NQYCLKMIGGPIGGMISDKILKSPSK). A run of 2 helical transmembrane segments spans residues 289 to 309 (YLCY…MLPH) and 310 to 330 (ESMP…IVFT). Residues 331–354 (QRAVFFAPIGEAKIAENKTGAAMA) are Cytoplasmic-facing. The helical transmembrane segment at 355–375 (LGSFIGYAPAMFCFSLYGYIL) threads the bilayer. Residues 376–385 (DLNPGIIGYK) lie on the Periplasmic side of the membrane. Residues 386–406 (IVFGIMACFAFSGAVVSVMLV) traverse the membrane as a helical segment. The Cytoplasmic portion of the chain corresponds to 407–421 (KRISQRKKEMLAAEA).

Belongs to the major facilitator superfamily.

The protein resides in the cell inner membrane. The sequence is that of Inner membrane protein YihN (yihN) from Escherichia coli (strain K12).